We begin with the raw amino-acid sequence, 303 residues long: MSSPARSADDGFEAGFPVLIVSGLSGAGKSTVLNVFEDLRYFTVDGLPVRLAPDMVRVLDAQALEQYQGIVLGMDLREAEFVQQFEQALARLQEMGVRPVLLFIEAEQGELMRRYATTRRPHPLESEGMGLELALAEERRRLAPVREAADLVFDTTSFSIHDLRRVIQRRWSSLKGRMRSLRVNIISFGYKYGVPKEADLVFDLRFLPNPYFDTSLRPQSGLDAPVVEYVFGTDSARTFRDRFIDFMTYLLPLYEAEGRYRIAVAIGCTGGRHRSVATAEALLDVLRKSDYAVTIEHRHLELG.

An ATP-binding site is contributed by 23 to 30 (GLSGAGKS). 75–78 (DLRE) serves as a coordination point for GTP.

This sequence belongs to the RapZ-like family.

In terms of biological role, displays ATPase and GTPase activities. The chain is Nucleotide-binding protein Dvul_1502 from Nitratidesulfovibrio vulgaris (strain DP4) (Desulfovibrio vulgaris).